A 1162-amino-acid polypeptide reads, in one-letter code: DNA-directed RNA polymerase subunit beta (1162 aa).

This sequence belongs to the RNA polymerase beta chain family. The RNAP catalytic core consists of 2 alpha, 1 beta, 1 beta' and 1 omega subunit. When a sigma factor is associated with the core the holoenzyme is formed, which can initiate transcription.

The catalysed reaction is RNA(n) + a ribonucleoside 5'-triphosphate = RNA(n+1) + diphosphate. Its function is as follows. DNA-dependent RNA polymerase catalyzes the transcription of DNA into RNA using the four ribonucleoside triphosphates as substrates. The polypeptide is DNA-directed RNA polymerase subunit beta (Clavibacter sepedonicus (Clavibacter michiganensis subsp. sepedonicus)).